The sequence spans 662 residues: Envelope glycoprotein (662 aa).

The signal sequence occupies residues 1 to 34; the sequence is MEGPTHPKPSKDKTFSWDLMILVGVLLRLDVGMA. Topologically, residues 35–606 are extracellular; the sequence is NPSPHQIYNV…FNKSPWFTTL (572 aa). N43 and N58 each carry an N-linked (GlcNAc...) asparagine; by host glycan. Cystine bridges form between C115-C132 and C124-C137. Residues 251–281 form a disordered region; sequence VLPDQKPPSRQSQIESRVTPHHSQGNGGTPG. Positions 258-274 are enriched in polar residues; the sequence is PSRQSQIESRVTPHHSQ. Residues N286, N322, and N327 are each glycosylated (N-linked (GlcNAc...) asparagine; by host). 3 disulfides stabilise this stretch: C332/C335, C332/C559, and C551/C558. Residues 332–335 carry the CXXC motif; the sequence is CWLC. Residues N351, N354, and N430 are each glycosylated (N-linked (GlcNAc...) asparagine; by host). The segment at 468 to 488 is fusion peptide; that stretch reads ISLTVALMLGGLTVGGIAAGV. Coiled coils occupy residues 496 to 545 and 555 to 591; these read LETA…ILFL and KEECCFYADHTGLVRDNMAKLRERLKQRQQLFDSQQG. The interval 534–550 is immunosuppression; the sequence is LQNRRGLDILFLQEGGL. The CX6CC motif lies at 551-559; that stretch reads CAALKEECC. Residues 607 to 627 form a helical membrane-spanning segment; that stretch reads ISSIMGPLLILLLILLFGPCI. The S-palmitoyl cysteine; by host moiety is linked to residue C626. The Cytoplasmic portion of the chain corresponds to 628–662; that stretch reads LNRLVQFVKDRISVVQALILTQQYQQIKQYDPDQP.

The mature envelope protein (Env) consists of a trimer of SU-TM heterodimers attached by a labile interchain disulfide bond. In terms of processing, specific enzymatic cleavages in vivo yield mature proteins. Envelope glycoproteins are synthesized as an inactive precursor that is N-glycosylated and processed likely by host cell furin or by a furin-like protease in the Golgi to yield the mature SU and TM proteins. The cleavage site between SU and TM requires the minimal sequence [KR]-X-[KR]-R. The R-peptide is released from the C-terminus of the cytoplasmic tail of the TM protein upon particle formation as a result of proteolytic cleavage by the viral protease. Cleavage of this peptide is required for TM to become fusogenic. The CXXC motif is highly conserved across a broad range of retroviral envelope proteins. It is thought to participate in the formation of a labile disulfide bond possibly with the CX6CC motif present in the transmembrane protein. Isomerization of the intersubunit disulfide bond to an SU intrachain disulfide bond is thought to occur upon receptor recognition in order to allow membrane fusion. Post-translationally, the transmembrane protein is palmitoylated. In terms of processing, the R-peptide is palmitoylated.

The protein resides in the virion membrane. The protein localises to the host cell membrane. In terms of biological role, the surface protein (SU) attaches the virus to the host cell by binding to its receptor. This interaction triggers the refolding of the transmembrane protein (TM) and is thought to activate its fusogenic potential by unmasking its fusion peptide. Fusion occurs at the host cell plasma membrane. The transmembrane protein (TM) acts as a class I viral fusion protein. Under the current model, the protein has at least 3 conformational states: pre-fusion native state, pre-hairpin intermediate state, and post-fusion hairpin state. During viral and target cell membrane fusion, the coiled coil regions (heptad repeats) assume a trimer-of-hairpins structure, positioning the fusion peptide in close proximity to the C-terminal region of the ectodomain. The formation of this structure appears to drive apposition and subsequent fusion of viral and target cell membranes. Membranes fusion leads to delivery of the nucleocapsid into the cytoplasm. This Felis catus (Cat) protein is Envelope glycoprotein (env).